The chain runs to 352 residues: C-C chemokine receptor type 5 (352 aa).

The Extracellular portion of the chain corresponds to 1–30; sequence MDYQVSSPTYDIDYYTSEPCQKVNVKQIAA. Sulfotyrosine is present on tyrosine 3. O-linked (GalNAc...) serine glycans are attached at residues serine 6 and serine 7. Tyrosine 10, tyrosine 14, and tyrosine 15 each carry sulfotyrosine. 2 cysteine pairs are disulfide-bonded: cysteine 20–cysteine 269 and cysteine 101–cysteine 178. A helical transmembrane segment spans residues 31 to 58; sequence RLLPPLYSLVFIFGFVGNILVVLILINC. At 59–68 the chain is on the cytoplasmic side; the sequence is KRLKSMTDIY. A helical membrane pass occupies residues 69–89; sequence LLNLAISDLFFLLTVPFWAHY. At 90-102 the chain is on the extracellular side; that stretch reads AAAQWDFGNTMCQ. Residues 103 to 124 form a helical membrane-spanning segment; that stretch reads LLTGLYFIGFFSGIFFIILLTI. Topologically, residues 125-141 are cytoplasmic; it reads DRYLAIVHAVFALKART. A helical transmembrane segment spans residues 142-166; that stretch reads VTFGVVTSVITWVVAVFASLPGIIF. Residues 167 to 198 lie on the Extracellular side of the membrane; it reads TRSQREGLHYTCSSHFPYSQYQFWKNFQTLKI. The chain crosses the membrane as a helical span at residues 199 to 218; it reads VILGLVLPLLVMVICYSGIL. The Cytoplasmic segment spans residues 219–235; that stretch reads KTLLRCRNEKKRHRAVR. A helical transmembrane segment spans residues 236-260; that stretch reads LIFTIMIVYFLFWAPYNIVLLLNTF. Residues 261-277 lie on the Extracellular side of the membrane; the sequence is QEFFGLNNCSSSNRLDQ. A helical membrane pass occupies residues 278–301; the sequence is AMQVTETLGMTHCCINPIIYAFVG. Topologically, residues 302–352 are cytoplasmic; the sequence is EKFRNYLLVFFQKHIAKRFCKCCSIFQQEAPERASSVYTRSTGEQETSVGL. Residues cysteine 321, cysteine 323, and cysteine 324 are each lipidated (S-palmitoyl cysteine). 4 positions are modified to phosphoserine; by BARK1: serine 336, serine 337, serine 342, and serine 349.

This sequence belongs to the G-protein coupled receptor 1 family. In terms of assembly, interacts with PRAF2. Efficient ligand binding to CCL3/MIP-1alpha and CCL4/MIP-1beta requires sulfation, O-glycosylation and sialic acid modifications. Glycosylation on Ser-6 is required for efficient binding of CCL4. Interacts with GRK2. Interacts with ARRB1 and ARRB2. Interacts with CNIH4. Interacts with S100A4; this interaction stimulates T-lymphocyte chemotaxis. Sulfated on at least 2 of the N-terminal tyrosines. Sulfation is required for efficient binding of the chemokines, CCL3 and CCL4. In terms of processing, palmitoylation in the C-terminal is important for cell surface expression. Post-translationally, phosphorylation on serine residues in the C-terminal is stimulated by binding CC chemokines especially by APO-RANTES. O-glycosylated, but not N-glycosylated. Ser-6 appears to be the major site even if Ser-7 may be also O-glycosylated. Also sialylated glycans present which contribute to chemokine binding. Thr-16 and Ser-17 may also be glycosylated and, if so, with small moieties such as a T-antigen.

Its subcellular location is the cell membrane. Functionally, receptor for a number of inflammatory CC-chemokines including CCL3/MIP-1-alpha, CCL4/MIP-1-beta and RANTES and subsequently transduces a signal by increasing the intracellular calcium ion level. May play a role in the control of granulocytic lineage proliferation or differentiation. Participates in T-lymphocyte migration to the infection site by acting as a chemotactic receptor. In Trachypithecus francoisi (Francois' leaf monkey), this protein is C-C chemokine receptor type 5 (CCR5).